A 1375-amino-acid chain; its full sequence is Protein lingerer (1375 aa).

Residues 1 to 69 (MSTQTRSGGG…KAQPKATTEQ (69 aa)) are disordered. Residues 53–62 (SKTDKPEKAQ) show a composition bias toward basic and acidic residues. One can recognise a UBA domain in the interval 84–124 (QINEKVLLLLTMTQRSEEEVCCALNECDYDLEAAANFLIEE). Composition is skewed to low complexity over residues 142-161 (ANNT…GNGN) and 173-184 (SNRGGTRGSSDS). Residues 142–286 (ANNTADGAAG…GSGRGGNANE (145 aa)) form a disordered region. A compositionally biased stretch (basic and acidic residues) spans 185-204 (RGWRGRETRENERNQRESRE). Over residues 228-282 (RNGGGRSGPGGGGRGGGFVSRSGRGGGRMGGRTGGPRGDRGSGGPGGAYGSGRGG) the composition is skewed to gly residues. Tyrosine 321 is modified (phosphotyrosine). Residue serine 324 is modified to Phosphoserine. Composition is skewed to polar residues over residues 374–387 (VQQG…SSSG) and 395–412 (ATLS…SAAV). Disordered stretches follow at residues 374 to 453 (VQQG…ASPD) and 613 to 646 (FEPL…QQQQ). Positions 426–441 (SGAGTGASAAAGGGAG) are enriched in gly residues. 2 stretches are compositionally biased toward low complexity: residues 442–453 (STPSSFVSASPD) and 629–646 (QQQQ…QQQQ). Position 672 is a phosphoserine (serine 672). Position 673 is a phosphothreonine (threonine 673). Serine 674 carries the post-translational modification Phosphoserine. Low complexity predominate over residues 750–767 (QGYGSYQPSSYQQQAGSG). 5 disordered regions span residues 750–801 (QGYG…SGNA), 869–894 (SVST…GQTG), 987–1036 (KNTS…GGSG), 1203–1234 (SKGG…DLTS), and 1251–1277 (EKQS…TSAQ). The span at 768–781 (AQSGTGAVSGGGGT) shows a compositional bias: gly residues. Low complexity-rich tracts occupy residues 789–801 (GGSS…SGNA), 869–882 (SVST…NSGS), and 987–1008 (KNTS…TGNA). Residues 1009-1036 (SGQGAGASTGGVGSSSGAGGAGSGGGSG) show a composition bias toward gly residues. Residues 1265-1277 (MPNTQTAGGTSAQ) are compositionally biased toward polar residues.

As to expression, at stage 11, expression is restricted to the neuroblasts, predominant in the central nervous system (CNS), including the brain and ventral nerve cord, and in the PNS. Later embryonic expression is seen in the gonads. Late third instar larvae show expression in the CNS, imaginal disks (including genital, eye-antennal, leg, wing and haltere disks), and gonads. In the larval brain, it is expressed in all of the glial cells and in clusters of neurons that projected contralaterally. In the larval ventral ganglion, it is expressed in subperineurial glia, peripheral exit glia, and a number of interneurons, but not in motor neurons. Isoform B is abundantly expressed in males and females. Isoform D is male specific and expressed at low levels.

Its subcellular location is the cytoplasm. Its function is as follows. Acts in the nervous system to mediate the control of copulatory organs during courtship. This chain is Protein lingerer, found in Drosophila melanogaster (Fruit fly).